A 399-amino-acid polypeptide reads, in one-letter code: Elongation factor Tu (399 aa).

Residues 10–207 (KTHMNVGTIG…AVDSYFPDPV (198 aa)) enclose the tr-type G domain. The interval 19-26 (GHIDHGKT) is G1. 19-26 (GHIDHGKT) is a GTP binding site. Position 26 (T26) interacts with Mg(2+). Positions 60-64 (GITIN) are G2. Positions 81–84 (DCPG) are G3. GTP is bound by residues 81 to 85 (DCPGH) and 136 to 139 (NKVD). Residues 136–139 (NKVD) are G4. Positions 174–176 (SAL) are G5.

This sequence belongs to the TRAFAC class translation factor GTPase superfamily. Classic translation factor GTPase family. EF-Tu/EF-1A subfamily. In terms of assembly, monomer.

The protein localises to the cytoplasm. It carries out the reaction GTP + H2O = GDP + phosphate + H(+). In terms of biological role, GTP hydrolase that promotes the GTP-dependent binding of aminoacyl-tRNA to the A-site of ribosomes during protein biosynthesis. The sequence is that of Elongation factor Tu from Petrotoga mobilis (strain DSM 10674 / SJ95).